A 234-amino-acid polypeptide reads, in one-letter code: CKLF-like MARVEL transmembrane domain-containing protein 4 (234 aa).

The segment covering 1–11 (MRSGEELDGFE) has biased composition (acidic residues). A disordered region spans residues 1–38 (MRSGEELDGFEGEASSTSMISGASSPYQPTTEPVSQRR). Residues 15-25 (SSTSMISGASS) show a composition bias toward low complexity. The region spanning 49–176 (YLRGALGRLK…NTFLAVQKWR (128 aa)) is the MARVEL domain. Helical transmembrane passes span 59-79 (VAQV…MACS), 85-105 (YFFE…LIMF), 123-143 (LVNT…LAAL), and 151-171 (IAAV…TFLA). Ser-194 is modified (phosphoserine).

The protein belongs to the chemokine-like factor family. As to quaternary structure, interacts with PD-L1/CD274 and CMTM6. Highly expressed in testis and prostate.

It is found in the membrane. Its function is as follows. Acts as a backup for CMTM6 to regulate plasma membrane expression of PD-L1/CD274, an immune inhibitory ligand critical for immune tolerance to self and antitumor immunity. May protect PD-L1/CD274 from being polyubiquitinated and targeted for degradation. This Homo sapiens (Human) protein is CKLF-like MARVEL transmembrane domain-containing protein 4.